Here is a 543-residue protein sequence, read N- to C-terminus: Chaperonin GroEL (543 aa).

ATP is bound by residues 30 to 33, Lys51, 87 to 91, Gly415, and Asp496; these read TLGP and DGTTT.

This sequence belongs to the chaperonin (HSP60) family. In terms of assembly, forms a cylinder of 14 subunits composed of two heptameric rings stacked back-to-back. Interacts with the co-chaperonin GroES.

The protein localises to the cytoplasm. The catalysed reaction is ATP + H2O + a folded polypeptide = ADP + phosphate + an unfolded polypeptide.. In terms of biological role, together with its co-chaperonin GroES, plays an essential role in assisting protein folding. The GroEL-GroES system forms a nano-cage that allows encapsulation of the non-native substrate proteins and provides a physical environment optimized to promote and accelerate protein folding. The sequence is that of Chaperonin GroEL from Gluconobacter oxydans (strain 621H) (Gluconobacter suboxydans).